The following is a 672-amino-acid chain: Probable copper-transporting P-type ATPase B (672 aa).

Basic and acidic residues predominate over residues 1 to 17 (MEHHSHQEHENHTSHGN). The tract at residues 1–22 (MEHHSHQEHENHTSHGNHEHHH) is disordered. 6 consecutive transmembrane segments (helical) span residues 30 to 50 (FFIS…MGVK), 55 to 75 (ISFT…FFYG), 93 to 113 (GMMT…LYAF), 125 to 145 (TMDF…GHWI), 282 to 302 (GYLF…WMLI), and 313 to 333 (LVTV…PLVT). Residue Asp-365 is the 4-aspartylphosphate intermediate of the active site. Asp-563 and Asp-567 together coordinate Mg(2+). 2 helical membrane-spanning segments follow: residues 621-643 (LWWG…ASIG) and 647-669 (SPAV…AFTL).

Belongs to the cation transport ATPase (P-type) (TC 3.A.3) family. Type IB subfamily.

It localises to the cell membrane. It catalyses the reaction Cu(+)(in) + ATP + H2O = Cu(+)(out) + ADP + phosphate + H(+). Functionally, involved in copper transport. The polypeptide is Probable copper-transporting P-type ATPase B (copB) (Staphylococcus aureus).